We begin with the raw amino-acid sequence, 728 residues long: Phosphoribosylformylglycinamidine synthase subunit PurL (728 aa).

H40 is a catalytic residue. Positions 43 and 82 each coordinate ATP. E84 contacts Mg(2+). Residues S85–H88 and R107 each bind substrate. The Proton acceptor role is filled by H86. D108 contributes to the Mg(2+) binding site. Q231 serves as a coordination point for substrate. Residue D259 coordinates Mg(2+). E303–Q305 lines the substrate pocket. ATP contacts are provided by N483 and G520. N521 serves as a coordination point for Mg(2+). S523 lines the substrate pocket.

The protein belongs to the FGAMS family. In terms of assembly, monomer. Part of the FGAM synthase complex composed of 1 PurL, 1 PurQ and 2 PurS subunits.

It localises to the cytoplasm. The catalysed reaction is N(2)-formyl-N(1)-(5-phospho-beta-D-ribosyl)glycinamide + L-glutamine + ATP + H2O = 2-formamido-N(1)-(5-O-phospho-beta-D-ribosyl)acetamidine + L-glutamate + ADP + phosphate + H(+). The protein operates within purine metabolism; IMP biosynthesis via de novo pathway; 5-amino-1-(5-phospho-D-ribosyl)imidazole from N(2)-formyl-N(1)-(5-phospho-D-ribosyl)glycinamide: step 1/2. In terms of biological role, part of the phosphoribosylformylglycinamidine synthase complex involved in the purines biosynthetic pathway. Catalyzes the ATP-dependent conversion of formylglycinamide ribonucleotide (FGAR) and glutamine to yield formylglycinamidine ribonucleotide (FGAM) and glutamate. The FGAM synthase complex is composed of three subunits. PurQ produces an ammonia molecule by converting glutamine to glutamate. PurL transfers the ammonia molecule to FGAR to form FGAM in an ATP-dependent manner. PurS interacts with PurQ and PurL and is thought to assist in the transfer of the ammonia molecule from PurQ to PurL. The sequence is that of Phosphoribosylformylglycinamidine synthase subunit PurL from Carboxydothermus hydrogenoformans (strain ATCC BAA-161 / DSM 6008 / Z-2901).